The following is a 91-amino-acid chain: Small ribosomal subunit protein uS19 (91 aa).

The protein belongs to the universal ribosomal protein uS19 family.

Functionally, protein S19 forms a complex with S13 that binds strongly to the 16S ribosomal RNA. The chain is Small ribosomal subunit protein uS19 from Aromatoleum aromaticum (strain DSM 19018 / LMG 30748 / EbN1) (Azoarcus sp. (strain EbN1)).